The sequence spans 63 residues: Large ribosomal subunit protein bL28 (63 aa).

This sequence belongs to the bacterial ribosomal protein bL28 family.

The protein is Large ribosomal subunit protein bL28 of Clostridium acetobutylicum (strain ATCC 824 / DSM 792 / JCM 1419 / IAM 19013 / LMG 5710 / NBRC 13948 / NRRL B-527 / VKM B-1787 / 2291 / W).